Reading from the N-terminus, the 280-residue chain is Bicarbonate transport system permease protein CmpB (280 aa).

Transmembrane regions (helical) follow at residues 32–52 (PIFGILGFLLLWQLISSAGLI), 99–119 (YSLAAIVGISTGILVGTQPLL), 126–146 (IFQFLRMVAPLAWVPIALVAL), 153–173 (AIFVIFITSVWPILINTTEGV), 198–218 (ILIPSALPYIFTGLRIAIGLA), 219–239 (WLAIIAAEIVMSGIVGIGFFI), and 251–271 (IILAVFYIGAVGLLLDRGIAY). Positions 88–266 (TLASLGRVAQ…YIGAVGLLLD (179 aa)) constitute an ABC transmembrane type-1 domain.

The protein belongs to the binding-protein-dependent transport system permease family. In terms of assembly, the complex is composed of two ATP-binding proteins (CmpC and CmpD), a transmembrane protein (CmpB) and a solute-binding protein (CmpA).

The protein localises to the cell inner membrane. Part of the ABC transporter complex CmpABCD involved in bicarbonate transport. Probably responsible for the translocation of the substrate across the membrane. The chain is Bicarbonate transport system permease protein CmpB (cmpB) from Synechocystis sp. (strain ATCC 27184 / PCC 6803 / Kazusa).